The chain runs to 329 residues: 4-hydroxythreonine-4-phosphate dehydrogenase (329 aa).

Substrate is bound by residues histidine 136 and threonine 137. The a divalent metal cation site is built by histidine 166, histidine 211, and histidine 266. Substrate contacts are provided by lysine 274, asparagine 283, and arginine 292.

This sequence belongs to the PdxA family. In terms of assembly, homodimer. Zn(2+) is required as a cofactor. The cofactor is Mg(2+). Requires Co(2+) as cofactor.

It localises to the cytoplasm. It carries out the reaction 4-(phosphooxy)-L-threonine + NAD(+) = 3-amino-2-oxopropyl phosphate + CO2 + NADH. It participates in cofactor biosynthesis; pyridoxine 5'-phosphate biosynthesis; pyridoxine 5'-phosphate from D-erythrose 4-phosphate: step 4/5. Catalyzes the NAD(P)-dependent oxidation of 4-(phosphooxy)-L-threonine (HTP) into 2-amino-3-oxo-4-(phosphooxy)butyric acid which spontaneously decarboxylates to form 3-amino-2-oxopropyl phosphate (AHAP). The chain is 4-hydroxythreonine-4-phosphate dehydrogenase from Salmonella arizonae (strain ATCC BAA-731 / CDC346-86 / RSK2980).